The sequence spans 678 residues: Methionine--tRNA ligase (678 aa).

Residues 14 to 24 (PYANGSIHLGH) carry the 'HIGH' region motif. Zn(2+)-binding residues include Cys-145, Cys-148, Cys-158, and Cys-161. The short motif at 331 to 335 (KMSKS) is the 'KMSKS' region element. Lys-334 is an ATP binding site. The 103-residue stretch at 576 to 678 (AFAAVDLRIA…SGAKPGQRVK (103 aa)) folds into the tRNA-binding domain.

This sequence belongs to the class-I aminoacyl-tRNA synthetase family. MetG type 1 subfamily. As to quaternary structure, homodimer. Zn(2+) is required as a cofactor.

The protein localises to the cytoplasm. It carries out the reaction tRNA(Met) + L-methionine + ATP = L-methionyl-tRNA(Met) + AMP + diphosphate. Is required not only for elongation of protein synthesis but also for the initiation of all mRNA translation through initiator tRNA(fMet) aminoacylation. The protein is Methionine--tRNA ligase of Ectopseudomonas mendocina (strain ymp) (Pseudomonas mendocina).